A 627-amino-acid chain; its full sequence is uncharacterized protein (627 aa).

The region spanning 21–136 (GISASDKILS…NSVCKRQTRS (116 aa)) is the WH1 domain. The interval 310–347 (RGSLSTPRIPTHRDSYRSATKPDTVPKQTPPPTHNSYV) is disordered.

This is an uncharacterized protein from Caenorhabditis elegans.